Here is a 300-residue protein sequence, read N- to C-terminus: UDP-3-O-acyl-N-acetylglucosamine deacetylase (300 aa).

The Zn(2+) site is built by His78, His237, and Asp241. Catalysis depends on His264, which acts as the Proton donor.

It belongs to the LpxC family. Requires Zn(2+) as cofactor.

The enzyme catalyses a UDP-3-O-[(3R)-3-hydroxyacyl]-N-acetyl-alpha-D-glucosamine + H2O = a UDP-3-O-[(3R)-3-hydroxyacyl]-alpha-D-glucosamine + acetate. The protein operates within glycolipid biosynthesis; lipid IV(A) biosynthesis; lipid IV(A) from (3R)-3-hydroxytetradecanoyl-[acyl-carrier-protein] and UDP-N-acetyl-alpha-D-glucosamine: step 2/6. In terms of biological role, catalyzes the hydrolysis of UDP-3-O-myristoyl-N-acetylglucosamine to form UDP-3-O-myristoylglucosamine and acetate, the committed step in lipid A biosynthesis. The chain is UDP-3-O-acyl-N-acetylglucosamine deacetylase from Acinetobacter baumannii (strain ATCC 17978 / DSM 105126 / CIP 53.77 / LMG 1025 / NCDC KC755 / 5377).